The sequence spans 443 residues: Probable D-serine dehydratase (443 aa).

Lysine 118 carries the post-translational modification N6-(pyridoxal phosphate)lysine.

This sequence belongs to the serine/threonine dehydratase family. DsdA subfamily. Requires pyridoxal 5'-phosphate as cofactor.

The catalysed reaction is D-serine = pyruvate + NH4(+). The chain is Probable D-serine dehydratase from Aeromonas hydrophila subsp. hydrophila (strain ATCC 7966 / DSM 30187 / BCRC 13018 / CCUG 14551 / JCM 1027 / KCTC 2358 / NCIMB 9240 / NCTC 8049).